We begin with the raw amino-acid sequence, 240 residues long: UDP-2,3-diacylglucosamine hydrolase (240 aa).

The Mn(2+) site is built by Asp8, His10, Asp41, Asn79, and His114. Substrate is bound at residue 79 to 80 (NR). Substrate is bound by residues Asp122, Ser160, Asn164, Lys167, and His195. Mn(2+) is bound by residues His195 and His197.

This sequence belongs to the LpxH family. Mn(2+) is required as a cofactor.

The protein localises to the cell inner membrane. It carries out the reaction UDP-2-N,3-O-bis[(3R)-3-hydroxytetradecanoyl]-alpha-D-glucosamine + H2O = 2-N,3-O-bis[(3R)-3-hydroxytetradecanoyl]-alpha-D-glucosaminyl 1-phosphate + UMP + 2 H(+). It functions in the pathway glycolipid biosynthesis; lipid IV(A) biosynthesis; lipid IV(A) from (3R)-3-hydroxytetradecanoyl-[acyl-carrier-protein] and UDP-N-acetyl-alpha-D-glucosamine: step 4/6. Hydrolyzes the pyrophosphate bond of UDP-2,3-diacylglucosamine to yield 2,3-diacylglucosamine 1-phosphate (lipid X) and UMP by catalyzing the attack of water at the alpha-P atom. Involved in the biosynthesis of lipid A, a phosphorylated glycolipid that anchors the lipopolysaccharide to the outer membrane of the cell. The chain is UDP-2,3-diacylglucosamine hydrolase from Salmonella schwarzengrund (strain CVM19633).